Reading from the N-terminus, the 685-residue chain is UvrABC system protein C (685 aa).

Positions 15 to 93 constitute a GIY-YIG domain; sequence ALPGVYRYFD…IKTQNPRFNI (79 aa). In terms of domain architecture, UVR spans 214 to 249; the sequence is QELLQAMEARMMAYSGQLAFEQAAEVRNQMQALSRV. Low complexity predominate over residues 365–388; that stretch reads AQGGDHAPAAQGGDPPPAASSGGH. The interval 365 to 391 is disordered; the sequence is AQGGDHAPAAQGGDPPPAASSGGHPLR.

The protein belongs to the UvrC family. In terms of assembly, interacts with UvrB in an incision complex.

The protein localises to the cytoplasm. Functionally, the UvrABC repair system catalyzes the recognition and processing of DNA lesions. UvrC both incises the 5' and 3' sides of the lesion. The N-terminal half is responsible for the 3' incision and the C-terminal half is responsible for the 5' incision. The chain is UvrABC system protein C from Verminephrobacter eiseniae (strain EF01-2).